Consider the following 89-residue polypeptide: Small ribosomal subunit protein uS15 (89 aa).

It belongs to the universal ribosomal protein uS15 family. Part of the 30S ribosomal subunit. Forms a bridge to the 50S subunit in the 70S ribosome, contacting the 23S rRNA.

Functionally, one of the primary rRNA binding proteins, it binds directly to 16S rRNA where it helps nucleate assembly of the platform of the 30S subunit by binding and bridging several RNA helices of the 16S rRNA. In terms of biological role, forms an intersubunit bridge (bridge B4) with the 23S rRNA of the 50S subunit in the ribosome. This Methylobacterium nodulans (strain LMG 21967 / CNCM I-2342 / ORS 2060) protein is Small ribosomal subunit protein uS15.